Reading from the N-terminus, the 357-residue chain is DNA replication and repair protein RecF (357 aa).

30–37 (GANGSGKT) is an ATP binding site.

Belongs to the RecF family.

The protein localises to the cytoplasm. The RecF protein is involved in DNA metabolism; it is required for DNA replication and normal SOS inducibility. RecF binds preferentially to single-stranded, linear DNA. It also seems to bind ATP. This chain is DNA replication and repair protein RecF, found in Salmonella schwarzengrund (strain CVM19633).